A 141-amino-acid polypeptide reads, in one-letter code: Endoribonuclease YbeY (141 aa).

Histidine 101, histidine 105, and histidine 111 together coordinate Zn(2+).

Belongs to the endoribonuclease YbeY family. Zn(2+) serves as cofactor.

Its subcellular location is the cytoplasm. In terms of biological role, single strand-specific metallo-endoribonuclease involved in late-stage 70S ribosome quality control and in maturation of the 3' terminus of the 16S rRNA. This chain is Endoribonuclease YbeY, found in Nitrosomonas eutropha (strain DSM 101675 / C91 / Nm57).